Reading from the N-terminus, the 129-residue chain is NADPH-dependent 7-cyano-7-deazaguanine reductase (129 aa).

The active-site Thioimide intermediate is cysteine 34. Aspartate 41 acts as the Proton donor in catalysis. Substrate is bound by residues 56 to 58 and 75 to 76; these read VEL and HE.

The protein belongs to the GTP cyclohydrolase I family. QueF type 1 subfamily.

Its subcellular location is the cytoplasm. It catalyses the reaction 7-aminomethyl-7-carbaguanine + 2 NADP(+) = 7-cyano-7-deazaguanine + 2 NADPH + 3 H(+). It participates in tRNA modification; tRNA-queuosine biosynthesis. Its function is as follows. Catalyzes the NADPH-dependent reduction of 7-cyano-7-deazaguanine (preQ0) to 7-aminomethyl-7-deazaguanine (preQ1). The chain is NADPH-dependent 7-cyano-7-deazaguanine reductase from Nitrosococcus oceani (strain ATCC 19707 / BCRC 17464 / JCM 30415 / NCIMB 11848 / C-107).